The following is a 288-amino-acid chain: Acetyl-coenzyme A carboxylase carboxyl transferase subunit beta (288 aa).

In terms of domain architecture, CoA carboxyltransferase N-terminal spans 34-288; that stretch reads LFAKCPACKH…HLVAFHGGGQ (255 aa). Positions 38, 41, 56, and 59 each coordinate Zn(2+). Residues 38-59 form a C4-type zinc finger; sequence CPACKHMIYKKDLGLAKICPTC.

Belongs to the AccD/PCCB family. Acetyl-CoA carboxylase is a heterohexamer composed of biotin carboxyl carrier protein (AccB), biotin carboxylase (AccC) and two subunits each of ACCase subunit alpha (AccA) and ACCase subunit beta (AccD). Requires Zn(2+) as cofactor.

It localises to the cytoplasm. It catalyses the reaction N(6)-carboxybiotinyl-L-lysyl-[protein] + acetyl-CoA = N(6)-biotinyl-L-lysyl-[protein] + malonyl-CoA. The protein operates within lipid metabolism; malonyl-CoA biosynthesis; malonyl-CoA from acetyl-CoA: step 1/1. Component of the acetyl coenzyme A carboxylase (ACC) complex. Biotin carboxylase (BC) catalyzes the carboxylation of biotin on its carrier protein (BCCP) and then the CO(2) group is transferred by the transcarboxylase to acetyl-CoA to form malonyl-CoA. The sequence is that of Acetyl-coenzyme A carboxylase carboxyl transferase subunit beta from Streptococcus pyogenes serotype M4 (strain MGAS10750).